Here is a 1522-residue protein sequence, read N- to C-terminus: Paired amphipathic helix protein pst1 (1522 aa).

A disordered region spans residues 139-174 (TILSSTDSNIPRPGTVKSSASPFVPNQNPSAPPPPP). A PAH 1 domain is found at 178–248 (RQLNVTDALS…QGFNTFLPPG (71 aa)). Positions 307 to 339 (QSSASHPVLQPPAPSTLQFNPSPSPAAPSYPPV) are disordered. Positions 328–337 (SPSPAAPSYP) are enriched in pro residues. The region spanning 345–415 (QAADLDQAIN…EEFKRFLPDV (71 aa)) is the PAH 2 domain. 3 disordered regions span residues 422 to 504 (ETQD…AFNV), 928 to 968 (AREN…DESS), and 1343 to 1522 (SGKA…KDDL). A compositionally biased stretch (polar residues) spans 426–441 (KSTVVPQESATATPKR). At serine 442 the chain carries Phosphoserine. Low complexity predominate over residues 442 to 468 (SPSATPTSALPPIGKFAPPTTAKAQPA). Position 446 is a phosphothreonine (threonine 446). One can recognise a PAH 3 domain in the interval 504–576 (VPIAQNKNPS…NWLKDLVKYN (73 aa)). Over residues 928–960 (ARENRSSVKEDYVSESTERTPDASEIDEHISEH) the composition is skewed to basic and acidic residues. Over residues 1385 to 1398 (GKSSVTRGNKTNLK) the composition is skewed to polar residues. The segment covering 1403-1432 (RNNDDSSNKINLSEKEKEKESIEDEEKNRE) has biased composition (basic and acidic residues). Serine 1443 bears the Phosphoserine mark. The segment covering 1461–1474 (TSSHRPERSSEKKS) has biased composition (basic and acidic residues). Residues 1478–1487 (VFTSVKQTAE) are compositionally biased toward polar residues. Residues 1488–1522 (NDADNEDDKTDMDDQTEETLDADNTMEEEPSKDDL) are compositionally biased toward acidic residues.

It localises to the nucleus. In terms of biological role, has a role in modulating the nuclear import of TF1 virus-like particles. Essential for viability. In Schizosaccharomyces pombe (strain 972 / ATCC 24843) (Fission yeast), this protein is Paired amphipathic helix protein pst1 (pst1).